The chain runs to 469 residues: MSAPRTLYDKIWDDHLVDEQADGTCLLYIDRHLVHEVTSPQAFEGLRMSGRKVRAPEKTLAVVDHNVPTSPDRHLGIKNEESRIQVEQLAKNAAEFNVEYYSENDKRQGIVHIIGPEQGFTLPGMTIVCGDSHTSTHGAFGSLAHGIGTSEVEHVLATQTLIQKKAKNMLVQVDGQLPAGVTAKDIVLAIIGEIGTAGGTGYVIEYAGEAIRSLSMEGRMTICNMSIEGGARAGLIAPDEITFEYIKGKPRAPKGEALEQAIAYWKTLKSDEGAHFDRIVKLNAAELPPIVSWGSSPEDVVSVQGIVPNPDEIQDETKRASKWRALDYMGLKPGTKMTDIAVDRVFIGSCTNGRIEDLRAAAKVVEGKTVASTVNAMIVPGSGLVKEQAEAEGLDKIFKAAGFDWREPGCSMCLAMNDDRLKPGERCASTSNRNFEGRQGFKGRTHLVSPTMAAAAAIAGHFVDIREWN.

3 residues coordinate [4Fe-4S] cluster: Cys-350, Cys-410, and Cys-413.

It belongs to the aconitase/IPM isomerase family. LeuC type 1 subfamily. Heterodimer of LeuC and LeuD. [4Fe-4S] cluster serves as cofactor.

The enzyme catalyses (2R,3S)-3-isopropylmalate = (2S)-2-isopropylmalate. The protein operates within amino-acid biosynthesis; L-leucine biosynthesis; L-leucine from 3-methyl-2-oxobutanoate: step 2/4. In terms of biological role, catalyzes the isomerization between 2-isopropylmalate and 3-isopropylmalate, via the formation of 2-isopropylmaleate. The protein is 3-isopropylmalate dehydratase large subunit of Rhizobium etli (strain ATCC 51251 / DSM 11541 / JCM 21823 / NBRC 15573 / CFN 42).